We begin with the raw amino-acid sequence, 268 residues long: Ribosomal RNA small subunit methyltransferase A (268 aa).

S-adenosyl-L-methionine contacts are provided by N16, L18, G43, E64, D89, and N110.

The protein belongs to the class I-like SAM-binding methyltransferase superfamily. rRNA adenine N(6)-methyltransferase family. RsmA subfamily.

The protein localises to the cytoplasm. The enzyme catalyses adenosine(1518)/adenosine(1519) in 16S rRNA + 4 S-adenosyl-L-methionine = N(6)-dimethyladenosine(1518)/N(6)-dimethyladenosine(1519) in 16S rRNA + 4 S-adenosyl-L-homocysteine + 4 H(+). In terms of biological role, specifically dimethylates two adjacent adenosines (A1518 and A1519) in the loop of a conserved hairpin near the 3'-end of 16S rRNA in the 30S particle. May play a critical role in biogenesis of 30S subunits. The polypeptide is Ribosomal RNA small subunit methyltransferase A (Pseudomonas savastanoi pv. phaseolicola (strain 1448A / Race 6) (Pseudomonas syringae pv. phaseolicola (strain 1448A / Race 6))).